The sequence spans 292 residues: Probable starch degradation products transport system permease protein AmyD (292 aa).

6 consecutive transmembrane segments (helical) span residues tryptophan 15–isoleucine 35, phenylalanine 77–threonine 97, phenylalanine 110–valine 130, phenylalanine 156–isoleucine 176, valine 205–phenylalanine 225, and methionine 260–isoleucine 280. In terms of domain architecture, ABC transmembrane type-1 spans isoleucine 71–glutamine 281.

This sequence belongs to the binding-protein-dependent transport system permease family. MalFG subfamily.

It is found in the cell membrane. In terms of biological role, probably part of a binding-protein-dependent transport system starch degradation products. Probably responsible for the translocation of the substrate across the membrane. The protein is Probable starch degradation products transport system permease protein AmyD (amyD) of Thermoanaerobacterium thermosulfurigenes (Clostridium thermosulfurogenes).